The following is a 190-amino-acid chain: Segregation and condensation protein B (190 aa).

This sequence belongs to the ScpB family. Homodimer. Homodimerization may be required to stabilize the binding of ScpA to the Smc head domains. Component of a cohesin-like complex composed of ScpA, ScpB and the Smc homodimer, in which ScpA and ScpB bind to the head domain of Smc. The presence of the three proteins is required for the association of the complex with DNA.

It is found in the cytoplasm. Its function is as follows. Participates in chromosomal partition during cell division. May act via the formation of a condensin-like complex containing Smc and ScpA that pull DNA away from mid-cell into both cell halves. This chain is Segregation and condensation protein B, found in Ruminiclostridium cellulolyticum (strain ATCC 35319 / DSM 5812 / JCM 6584 / H10) (Clostridium cellulolyticum).